Here is a 509-residue protein sequence, read N- to C-terminus: Midnolin (509 aa).

A compositionally biased stretch (polar residues) spans Met1–Ser12. The segment at Met1–Pro27 is disordered. Residues Met28–Gly102 form the Ubiquitin-like domain. Disordered stretches follow at residues Gly172–Leu295, Gln370–Pro404, and Lys448–Leu485. Low complexity predominate over residues Gly176 to Gly190. Residues His196–His209 show a composition bias toward basic residues. Residues Ala220–Pro231 are compositionally biased toward pro residues. Positions Pro261–Ala285 are enriched in low complexity. Polar residues predominate over residues Lys286–Leu295. Residues Ser376–Pro386 show a composition bias toward pro residues. The segment covering His387–Ser400 has biased composition (low complexity).

Its subcellular location is the nucleus. It localises to the cytoplasm. The protein localises to the cytosol. It is found in the nucleolus. In terms of biological role, facilitates ubiquitin-independent proteasomal degradation of polycomb protein CBX4. Plays a role in inhibiting the activity of glucokinase GCK and both glucose-induced and basal insulin secretion. The polypeptide is Midnolin (midn) (Danio rerio (Zebrafish)).